Here is an 840-residue protein sequence, read N- to C-terminus: Intracellular phospholipase A1 (840 aa).

Disordered stretches follow at residues 1–142 and 666–718; these read MSGS…RRRK and KKNK…AANA. Residues 26 to 39 show a composition bias toward basic and acidic residues; that stretch reads GKVKQKEKPKEKQM. Low complexity predominate over residues 97–111; sequence SRPSGLPSNGNPGSS. The DDHD domain maps to 564 to 827; it reads LEFKVKYLFA…ALFLANVLYC (264 aa). Basic and acidic residues predominate over residues 668 to 680; it reads NKDDKTADARSGG. The segment covering 681-694 has biased composition (acidic residues); that stretch reads DDENEDEDECDSDE.

It belongs to the PA-PLA1 family.

It carries out the reaction 1,2-dihexadecanoyl-sn-glycero-3-phospho-(1D-myo-inositol) + H2O = 2-hexadecanoyl-sn-glycero-3-phospho-(1D-myo-inositol) + hexadecanoate + H(+). It catalyses the reaction a 1,2-diacyl-sn-glycero-3-phospho-L-serine + H2O = a 2-acyl-sn-glycero-3-phospho-L-serine + a fatty acid + H(+). The catalysed reaction is 1-hexadecanoyl-2-(9Z-octadecenoyl)-sn-glycero-3-phospho-L-serine + H2O = 2-(9Z-octadecenoyl)-sn-glycero-3-phospho-L-serine + hexadecanoate + H(+). The enzyme catalyses 1,2-di-(9Z-octadecenoyl)-sn-glycero-3-phosphocholine + H2O = (9Z-octadecenoyl)-sn-glycero-3-phosphocholine + (9Z)-octadecenoate + H(+). It carries out the reaction a 1,2-diacyl-sn-glycero-3-phosphocholine + H2O = a 1-acyl-sn-glycero-3-phosphocholine + a fatty acid + H(+). It catalyses the reaction 1,2-dihexadecanoyl-sn-glycero-3-phosphocholine + H2O = 1-hexadecanoyl-sn-glycero-3-phosphocholine + hexadecanoate + H(+). Its activity is regulated as follows. Inhibited by E-6-bromomethylene-3-1-naphthalenyl-2H-tetrahydropyran-2-one (BEL) in vitro. In terms of biological role, hydrolyzes the ester bond at the sn-1 position of glycerophospholipids and produces 2-acyl lysophospholipids, being phosphatidylinositol (PI) its major substrate. PI is a versatile lipid that not only serves as a structural component of cellular membranes, but also plays important roles in signal transduction through distinct phosphorylated derivatives of the inositol head group. Catalyzes the hydrolysis of phosphatidylcholine at sn-2 position in vitro. Regulates asymmetric division, an important property of stem cells in C.elegans, by controlling the subcellular localizations of beta-catenin. This Caenorhabditis elegans protein is Intracellular phospholipase A1.